Here is a 68-residue protein sequence, read N- to C-terminus: DNA gyrase inhibitor YacG (68 aa).

Residues cysteine 10, cysteine 13, cysteine 29, and cysteine 33 each coordinate Zn(2+).

Belongs to the DNA gyrase inhibitor YacG family. Interacts with GyrB. Requires Zn(2+) as cofactor.

Its function is as follows. Inhibits all the catalytic activities of DNA gyrase by preventing its interaction with DNA. Acts by binding directly to the C-terminal domain of GyrB, which probably disrupts DNA binding by the gyrase. The protein is DNA gyrase inhibitor YacG of Haemophilus influenzae (strain PittGG).